The sequence spans 485 residues: REST corepressor 1 (485 aa).

2 disordered regions span residues 1–26 and 49–110; these read MPAM…ASAS and AAAS…VGPQ. 2 stretches are compositionally biased toward low complexity: residues 49-64 and 74-95; these read AAAS…AAAA and AAAA…SGSS. Residues 78–257 form an interaction with HDAC1 region; sequence PNGNSSSNSW…RHARKQKRER (180 aa). The 87-residue stretch at 103–189 folds into the ELM2 domain; that stretch reads GGMRVGPQYQ…KSLADLPNFT (87 aa). A Glycyl lysine isopeptide (Lys-Gly) (interchain with G-Cter in SUMO2) cross-link involves residue Lys-122. Position 127 is a phosphoserine (Ser-127). Residues 190 to 241 form the SANT 1 domain; sequence PFPDEWTVEDKVLFEQAFSFHGKTFHRIQQMLPDKSIASLVKFYYSWKKTRT. A coiled-coil region spans residues 244–273; that stretch reads SVMDRHARKQKREREESEDELEEANGNNPI. Residues 244–314 are disordered; the sequence is SVMDRHARKQ…AKNRAKRKPP (71 aa). Ser-260 is modified (phosphoserine). Residues 278–288 are compositionally biased toward basic and acidic residues; it reads DQNKESKKEVP. Positions 296–384 are interaction with KDM1A; that stretch reads VKKEKHSTQA…LPEVIQKCNA (89 aa). A Glycyl lysine isopeptide (Lys-Gly) (interchain with G-Cter in SUMO2) cross-link involves residue Lys-297. Positions 334-369 form a coiled coil; it reads ATTVLRQLDMELVSVKRQIQNIKQTNSALKEKLDGG. Positions 381 to 432 constitute an SANT 2 domain; that stretch reads KCNARWTTEEQLLAVQAIRKYGRDFQAISDVIGNKSVVQVKNFFVNYRRRFN. A disordered region spans residues 442-485; it reads AEHGKEETNGPSNQKPVKSPDNSIKMPEEEDEAPVLDVRYASAS. Residues 450-463 are compositionally biased toward polar residues; the sequence is NGPSNQKPVKSPDN. Ser-460 carries the phosphoserine modification. Residue Lys-466 forms a Glycyl lysine isopeptide (Lys-Gly) (interchain with G-Cter in SUMO2) linkage.

Belongs to the CoREST family. As to quaternary structure, interacts directly with GFI1 and GFI1B in a RCOR/GFI/KDM1A/HDAC complex. Interacts with INMS1. Component of a BHC histone deacetylase complex that contains HDAC1, HDAC2, HMG20B/BRAF35, KDM1A, RCOR1/CoREST and PHF21A/BHC80. The BHC complex may also contain ZMYM2, ZNF217, ZMYM3, GSE1 and GTF2I. Interacts with REST. Interacts with the SMARCE1/BAF57, suggesting that the BHC complex may recruit the ATP-dependent chromatin-remodeling SWI-SNF complex. Interacts with SOX2. (Microbial infection) Interacts with herpes virus HSV-1 ICP0 protein; the interaction leads to the disruption of the BHC complex, thereby preventing the BHC complex from repressing transcription of viral genes. In terms of processing, phosphorylated by HSV-1 protein kinases in case of infection. As to expression, ubiquitously expressed.

Its subcellular location is the nucleus. Functionally, essential component of the BHC complex, a corepressor complex that represses transcription of neuron-specific genes in non-neuronal cells. The BHC complex is recruited at RE1/NRSE sites by REST and acts by deacetylating and demethylating specific sites on histones, thereby acting as a chromatin modifier. In the BHC complex, it serves as a molecular beacon for the recruitment of molecular machinery, including MeCP2 and SUV39H1, that imposes silencing across a chromosomal interval. Plays a central role in demethylation of Lys-4 of histone H3 by promoting demethylase activity of KDM1A on core histones and nucleosomal substrates. It also protects KDM1A from the proteasome. Component of a RCOR/GFI/KDM1A/HDAC complex that suppresses, via histone deacetylase (HDAC) recruitment, a number of genes implicated in multilineage blood cell development and controls hematopoietic differentiation. The chain is REST corepressor 1 (RCOR1) from Homo sapiens (Human).